The sequence spans 147 residues: Large ribosomal subunit protein uL11 (147 aa).

This sequence belongs to the universal ribosomal protein uL11 family. As to quaternary structure, part of the ribosomal stalk of the 50S ribosomal subunit. Interacts with L10 and the large rRNA to form the base of the stalk. L10 forms an elongated spine to which L12 dimers bind in a sequential fashion forming a multimeric L10(L12)X complex. In terms of processing, one or more lysine residues are methylated.

Functionally, forms part of the ribosomal stalk which helps the ribosome interact with GTP-bound translation factors. This Cytophaga hutchinsonii (strain ATCC 33406 / DSM 1761 / CIP 103989 / NBRC 15051 / NCIMB 9469 / D465) protein is Large ribosomal subunit protein uL11.